The chain runs to 65 residues: Conotoxin mr5.1b (65 aa).

The signal sequence occupies residues 1–19 (MRCVPVFVILLLLIASAPS). Residues 20 to 48 (VDARLKTKDDMPLPSSHANIKRTLQMLRN) constitute a propeptide that is removed on maturation. A 4-carboxyglutamate modification is found at glutamate 60.

This sequence belongs to the conotoxin T superfamily. In terms of processing, contains 2 disulfide bonds that can be either 'C1-C3, C2-C4' or 'C1-C4, C2-C3', since these disulfide connectivities have been observed for conotoxins with cysteine framework V (for examples, see AC P0DQQ7 and AC P81755). Expressed by the venom duct.

The protein localises to the secreted. This is Conotoxin mr5.1b from Conus marmoreus (Marble cone).